The sequence spans 79 residues: uncharacterized protein (79 aa).

The span at 22–72 (NNNNNNNNNNNNNNNNNNNNNNNNNNNNNNNNNNNNNNNNNNNNNNNNNNN) shows a compositional bias: low complexity. The interval 22-79 (NNNNNNNNNNNNNNNNNNNNNNNNNNNNNNNNNNNNNNNNNNNNNNNNNNNKRFFFFG) is disordered.

This is an uncharacterized protein from Dictyostelium discoideum (Social amoeba).